We begin with the raw amino-acid sequence, 255 residues long: MRLIALPAFDDNYIWALVAADGRAIIVDPGQAEPVLAAAQRQGLVPSAVLLTHHHGDHIGGVAELQQRWPDLALFGPADERIPTNAHHVGRGERLRLLDVEFQVIKVPGHTRSHIAFLADGHLFSGDTLFSLGCGRMFEGTAPQMFDSLQRLASLPGETLVCCGHEYTLANAAFALHVDPTNAALQRRQQEAQAMRHAARPTLPISLKSELATNPFLRTSHPEIRAAVAPRAASALSSEVDIFAELRRWKDEFRA.

Zn(2+) contacts are provided by His53, His55, Asp57, His58, His110, Asp127, and His165.

The protein belongs to the metallo-beta-lactamase superfamily. Glyoxalase II family. As to quaternary structure, monomer. Zn(2+) serves as cofactor.

It carries out the reaction an S-(2-hydroxyacyl)glutathione + H2O = a 2-hydroxy carboxylate + glutathione + H(+). It participates in secondary metabolite metabolism; methylglyoxal degradation; (R)-lactate from methylglyoxal: step 2/2. Its function is as follows. Thiolesterase that catalyzes the hydrolysis of S-D-lactoyl-glutathione to form glutathione and D-lactic acid. The sequence is that of Hydroxyacylglutathione hydrolase from Xanthomonas axonopodis pv. citri (strain 306).